The chain runs to 210 residues: Large ribosomal subunit protein uL3 (210 aa).

The disordered stretch occupies residues 133-152; that stretch reads ATHGNSLSHRVHGSTGQNQT. Residue glutamine 151 is modified to N5-methylglutamine.

Belongs to the universal ribosomal protein uL3 family. In terms of assembly, part of the 50S ribosomal subunit. Forms a cluster with proteins L14 and L19. Methylated by PrmB.

One of the primary rRNA binding proteins, it binds directly near the 3'-end of the 23S rRNA, where it nucleates assembly of the 50S subunit. The chain is Large ribosomal subunit protein uL3 from Francisella philomiragia subsp. philomiragia (strain ATCC 25017 / CCUG 19701 / FSC 153 / O#319-036).